The chain runs to 507 residues: MFS-type transporter acdC (507 aa).

The tract at residues 1–50 (MSPNAPAVDIGAAPSLDTPEGDTKQPAEDHVEKDSNLVDWDGPDDPEHPQ) is disordered. The span at 21–36 (GDTKQPAEDHVEKDSN) shows a compositional bias: basic and acidic residues. Residue N51 is glycosylated (N-linked (GlcNAc...) asparagine). Residues 58-78 (WGITFSLASMTMWITFSSSVL) form a helical membrane-spanning segment. The N-linked (GlcNAc...) asparagine glycan is linked to N90. A run of 5 helical transmembrane segments spans residues 95–115 (VMPL…LCWA), 125–145 (LPTF…AVAP), 155–175 (FFVG…MADI), 186–206 (PFFF…GGFI), and 215–235 (WTAW…LLIV). N-linked (GlcNAc...) asparagine glycosylation is present at N257. 6 helical membrane-spanning segments follow: residues 290–310 (PILI…YLFL), 328–348 (IAGL…GIII), 371–391 (LVEM…FGWA), 395–415 (HWMV…VLFM), 442–462 (FLGG…GVDW), and 466–486 (ILGF…IFGA).

Belongs to the major facilitator superfamily. CAR1 family.

Its subcellular location is the membrane. In terms of biological role, MFS-type transporter; part of the gene cluster that mediates the biosynthesis of aspcandine, a pyrrolobenzazepine alkaloid. This Aspergillus candidus protein is MFS-type transporter acdC.